The primary structure comprises 160 residues: Transcription elongation factor GreA (160 aa).

The protein belongs to the GreA/GreB family.

Its function is as follows. Necessary for efficient RNA polymerase transcription elongation past template-encoded arresting sites. The arresting sites in DNA have the property of trapping a certain fraction of elongating RNA polymerases that pass through, resulting in locked ternary complexes. Cleavage of the nascent transcript by cleavage factors such as GreA or GreB allows the resumption of elongation from the new 3'terminus. GreA releases sequences of 2 to 3 nucleotides. In Leuconostoc citreum (strain KM20), this protein is Transcription elongation factor GreA.